The primary structure comprises 101 residues: Acylphosphatase (101 aa).

One can recognise an Acylphosphatase-like domain in the interval 12–98 (RAHVFVTGRV…EGLRGFEVKR (87 aa)). Active-site residues include Arg-27 and Asn-45.

This sequence belongs to the acylphosphatase family.

It catalyses the reaction an acyl phosphate + H2O = a carboxylate + phosphate + H(+). The chain is Acylphosphatase (acyP) from Nostoc sp. (strain PCC 7120 / SAG 25.82 / UTEX 2576).